Reading from the N-terminus, the 252-residue chain is 2-succinyl-6-hydroxy-2,4-cyclohexadiene-1-carboxylate synthase (252 aa).

The protein belongs to the AB hydrolase superfamily. MenH family. As to quaternary structure, monomer.

It carries out the reaction 5-enolpyruvoyl-6-hydroxy-2-succinyl-cyclohex-3-ene-1-carboxylate = (1R,6R)-6-hydroxy-2-succinyl-cyclohexa-2,4-diene-1-carboxylate + pyruvate. It functions in the pathway quinol/quinone metabolism; 1,4-dihydroxy-2-naphthoate biosynthesis; 1,4-dihydroxy-2-naphthoate from chorismate: step 3/7. Its pathway is quinol/quinone metabolism; menaquinone biosynthesis. Catalyzes a proton abstraction reaction that results in 2,5-elimination of pyruvate from 2-succinyl-5-enolpyruvyl-6-hydroxy-3-cyclohexene-1-carboxylate (SEPHCHC) and the formation of 2-succinyl-6-hydroxy-2,4-cyclohexadiene-1-carboxylate (SHCHC). The chain is 2-succinyl-6-hydroxy-2,4-cyclohexadiene-1-carboxylate synthase from Salmonella newport (strain SL254).